The chain runs to 190 residues: MALRGHPEPQPTNTPLSATVGGPISLFTQPRCHSAARDLVWSQAWPDPDVLEISMQTPGGSSCRKEAVLPRLRVTRPLVPEPAILPVCAARLAGSLATDLSRSHSLLPPWVDLKEPPPPSAPSLLLEDPGQGGCHGAQSCVGTCELANGARGFCPEMGQNESLSEERKGHESKRKSGGRGSPSSHPTQAS.

Disordered regions lie at residues 1 to 21 (MALRGHPEPQPTNTPLSATVG) and 155 to 190 (PEMGQNESLSEERKGHESKRKSGGRGSPSSHPTQAS). Residues 181–190 (SPSSHPTQAS) are compositionally biased toward low complexity.

This is an uncharacterized protein from Homo sapiens (Human).